The primary structure comprises 67 residues: MKASELREKKTEELENELLERRKEQFNLRMQKASGQLARTDQLGKVRRDVARIKTVLNERKRAERQA.

It belongs to the universal ribosomal protein uL29 family.

This is Large ribosomal subunit protein uL29 from Halorhodospira halophila (strain DSM 244 / SL1) (Ectothiorhodospira halophila (strain DSM 244 / SL1)).